The following is a 268-amino-acid chain: tRNA threonylcarbamoyladenosine dehydratase (268 aa).

A helical membrane pass occupies residues 237 to 257 (GFGAATMVTATFGFVAVSHAL).

Belongs to the HesA/MoeB/ThiF family. In terms of assembly, interacts with CsdE.

It localises to the membrane. Functionally, catalyzes the ATP-dependent dehydration of threonylcarbamoyladenosine at position 37 (t(6)A37) to form cyclic t(6)A37 (ct(6)A37) in tRNAs that read codons beginning with adenine. TcdA is also part of a sulfur transfer pathway; is able to accept sulfur from CsdA directly in vitro, but CsdE might act as the sulfur donor in vivo. This is tRNA threonylcarbamoyladenosine dehydratase (tcdA) from Escherichia coli (strain K12).